Here is a 329-residue protein sequence, read N- to C-terminus: uncharacterized protein (329 aa).

The interval 109-147 (KALGNDQTSSMTSSTTAVTVAKSGDGQQQTGEQKEEDWK) is disordered. Over residues 116-131 (TSSMTSSTTAVTVAKS) the composition is skewed to low complexity.

To the C-terminal of MG321/MPN_456.

This is an uncharacterized protein from Mycoplasma pneumoniae (strain ATCC 29342 / M129 / Subtype 1) (Mycoplasmoides pneumoniae).